A 452-amino-acid polypeptide reads, in one-letter code: tRNA modification GTPase MnmE (452 aa).

(6S)-5-formyl-5,6,7,8-tetrahydrofolate is bound by residues R21, E78, and K118. The 162-residue stretch at 214–375 (GMKVVIAGRP…LRDHLKQAMG (162 aa)) folds into the TrmE-type G domain. A K(+)-binding site is contributed by N224. GTP is bound by residues 224 to 229 (NAGKSS), 243 to 249 (TDIAGTT), and 268 to 271 (DTAG). Residue S228 participates in Mg(2+) binding. The K(+) site is built by T243, I245, and T248. T249 is a binding site for Mg(2+). K452 contributes to the (6S)-5-formyl-5,6,7,8-tetrahydrofolate binding site.

Belongs to the TRAFAC class TrmE-Era-EngA-EngB-Septin-like GTPase superfamily. TrmE GTPase family. Homodimer. Heterotetramer of two MnmE and two MnmG subunits. K(+) serves as cofactor.

The protein resides in the cytoplasm. Its function is as follows. Exhibits a very high intrinsic GTPase hydrolysis rate. Involved in the addition of a carboxymethylaminomethyl (cmnm) group at the wobble position (U34) of certain tRNAs, forming tRNA-cmnm(5)s(2)U34. The protein is tRNA modification GTPase MnmE of Haemophilus influenzae (strain 86-028NP).